The sequence spans 151 residues: Ribosome maturation factor RimP (151 aa).

It belongs to the RimP family.

The protein localises to the cytoplasm. Functionally, required for maturation of 30S ribosomal subunits. In Shewanella woodyi (strain ATCC 51908 / MS32), this protein is Ribosome maturation factor RimP.